The chain runs to 222 residues: Arginine ABC transporter permease protein ArtM (222 aa).

Residues 1–15 are Periplasmic-facing; it reads MFEYLPELMKGLHTS. Residues 12–208 enclose the ABC transmembrane type-1 domain; sequence LHTSLTLTVA…VVNGLLTLMM (197 aa). The chain crosses the membrane as a helical span at residues 16-36; it reads LTLTVASLIVALILALIFTII. Residues 37–49 lie on the Cytoplasmic side of the membrane; the sequence is LTLKTPVLVWLVR. A helical transmembrane segment spans residues 50-70; that stretch reads GYITLFTGTPLLVQIFLIYYG. The Periplasmic portion of the chain corresponds to 71–79; that stretch reads PGQFPTLQE. The chain crosses the membrane as a helical span at residues 80–100; sequence YPALWHLLSEPWLCALIALSL. The Cytoplasmic portion of the chain corresponds to 101–154; sequence NSAAYTTQLFYGAIRAIPEGQWQSCSALGMSKKDTLAILLPYAFKRSLSSYSNE. The helical transmembrane segment at 155–175 threads the bilayer; the sequence is VVLVFKSTSLAYTITLMEVMG. Residues 176–186 lie on the Periplasmic side of the membrane; the sequence is YSQLLYGRTYD. Residues 187–207 form a helical membrane-spanning segment; that stretch reads VMVFGAAGIIYLVVNGLLTLM. The Cytoplasmic portion of the chain corresponds to 208–222; that stretch reads MRLIERKALAFERRN.

Belongs to the binding-protein-dependent transport system permease family. HisMQ subfamily. The complex is composed of two ATP-binding proteins (ArtP), two transmembrane proteins (ArtM and ArtQ) and two solute-binding proteins (ArtJ and ArtI).

The protein localises to the cell inner membrane. Its function is as follows. Part of the ABC transporter complex ArtPIQMJ involved in arginine transport. Probably responsible for the translocation of the substrate across the membrane. This chain is Arginine ABC transporter permease protein ArtM (artM), found in Escherichia coli (strain K12).